Here is a 465-residue protein sequence, read N- to C-terminus: Sodium-coupled neutral amino acid transporter 7 (465 aa).

11 helical membrane-spanning segments follow: residues 54-74, 82-102, 128-148, 177-197, 204-224, 244-264, 275-295, 318-338, 370-390, 394-414, and 427-447; these read AVFI…PAAF, AGVT…VILA, ICEL…LIII, FTIT…KEIG, TLSV…YIWP, FNAM…VPVF, WWGV…GTGV, VAVA…YPIL, ILQT…IPDI, ISLI…LCLI, and SWNA…FIFG.

This sequence belongs to the amino acid/polyamine transporter 2 family.

Its subcellular location is the lysosome membrane. It localises to the cell projection. The protein resides in the axon. The enzyme catalyses L-asparagine(in) + Na(+)(in) = L-asparagine(out) + Na(+)(out). It carries out the reaction L-glutamine(in) + Na(+)(in) = L-glutamine(out) + Na(+)(out). Its function is as follows. Symporter that selectively cotransports sodium ions and amino acids, such as L-glutamine and L-asparagine from the lysosome into the cytoplasm and may participates in mTORC1 activation. The transport activity requires an acidic lysosomal lumen. The sequence is that of Sodium-coupled neutral amino acid transporter 7 from Danio rerio (Zebrafish).